Reading from the N-terminus, the 332-residue chain is MKLGRAVLGLLLLAPSVVQAVEPISLGLALAGVLTGYIYPRLYCLFAECCGQKRSLSREALQKDLDDNLFGQHLAKKIILNAVFGFINNPKPKKPLTLSLHGWTGTGKNFVSKIIAENIYEGGLNSDYVHLFVATLHFPHASNITLYKDQLQLWIRGNVSACARSIFIFDEMDKMHAGLIDAIKPFLDYYDLVDGVSYQKAMFIFLSNAGAERITDVALDFWRSGKQREDIKLKDIEHALSVSVFNNKNSGFWHSSLIDRNLIDYFVPFLPLEYKHLKMCIRVEMQSRGYEIDEDIVSRVAEEMTFFPKEERVFSDKGCKTVFTKLDYYYDD.

The first 20 residues, 1 to 20 (MKLGRAVLGLLLLAPSVVQA), serve as a signal peptide directing secretion. The interaction with SNAPIN stretch occupies residues 91–251 (KPKKPLTLSL…VSVFNNKNSG (161 aa)). An ATP-binding site is contributed by 102-109 (GWTGTGKN). 2 N-linked (GlcNAc...) (high mannose) asparagine glycosylation sites follow: asparagine 143 and asparagine 158. Residues 251–332 (GFWHSSLIDR…FTKLDYYYDD (82 aa)) are interaction with KLC1. Residues 312-332 (RVFSDKGCKTVFTKLDYYYDD) form an interaction with SYNE3 region.

The protein belongs to the ClpA/ClpB family. Torsin subfamily. Homohexamer. Interacts with TOR1B; the interaction may be specific of neural tissues. Interacts (ATP-bound) with TOR1AIP1 and TOR1AIP2; the interactions induce ATPase activity. Interacts with KLHL14; preferentially when ATP-free. Interacts with KLC1 (via TPR repeats); the interaction associates TOR1A with the kinesin oligomeric complex. Interacts with COPS4; the interaction associates TOR1A with the CSN complex. Interacts with SNAPIN; the interaction is direct and associates SNAPIN with the CSN complex. Interacts with STON2. Interacts (ATP-bound) with SYNE3 (via KASH domain); the interaction is required for SYNE3 nuclear envelope localization. Interacts with VIM; the interaction associates TOR1A with the cytoskeleton. Interacts with PLEC. Interacts (ATP-bound) with SLC6A3; regulates SLC6A3 transport to the plasma membrane. Post-translationally, N-glycosylated. In terms of tissue distribution, widely expressed. Highest levels in kidney and liver. In the brain, high levels found in the dopaminergic neurons of the substantia nigra pars compacta, as well as in the neocortex, hippocampus and cerebellum. Also highly expressed in the spinal cord.

Its subcellular location is the endoplasmic reticulum lumen. It is found in the nucleus membrane. The protein resides in the cell projection. The protein localises to the growth cone. It localises to the cytoplasmic vesicle membrane. Its subcellular location is the cytoplasmic vesicle. It is found in the secretory vesicle. The protein resides in the synaptic vesicle. The protein localises to the cytoplasm. It localises to the cytoskeleton. The catalysed reaction is ATP + H2O = ADP + phosphate + H(+). Its function is as follows. Protein with chaperone functions important for the control of protein folding, processing, stability and localization as well as for the reduction of misfolded protein aggregates. Involved in the regulation of synaptic vesicle recycling, controls STON2 protein stability in collaboration with the COP9 signalosome complex (CSN). In the nucleus, may link the cytoskeleton with the nuclear envelope, this mechanism seems to be crucial for the control of nuclear polarity, cell movement and, specifically in neurons, nuclear envelope integrity. Participates in the cellular trafficking and may regulate the subcellular location of multipass membrane proteins such as the dopamine transporter SLC6A3, leading to the modulation of dopamine neurotransmission. In the endoplasmic reticulum, plays a role in the quality control of protein folding by increasing clearance of misfolded proteins such as SGCE variants or holding them in an intermediate state for proper refolding. May have a redundant function with TOR1B in non-neural tissues. The polypeptide is Torsin-1A (TOR1A) (Homo sapiens (Human)).